Consider the following 121-residue polypeptide: Large ribosomal subunit protein bL19 (121 aa).

This sequence belongs to the bacterial ribosomal protein bL19 family.

Its function is as follows. This protein is located at the 30S-50S ribosomal subunit interface and may play a role in the structure and function of the aminoacyl-tRNA binding site. This chain is Large ribosomal subunit protein bL19, found in Neisseria meningitidis serogroup C (strain 053442).